The primary structure comprises 83 residues: BmKBT-like peptide (83 aa).

An N-terminal signal peptide occupies residues 1–19 (MKAALLLVISTLMLIGVLT). The 61-residue stretch at 21-81 (KSGYPIQHDG…TWSRETNKCR (61 aa)) folds into the LCN-type CS-alpha/beta domain. Intrachain disulfides connect Cys31-Cys80, Cys35-Cys54, Cys41-Cys61, and Cys45-Cys63. Position 83 (Lys83) is a propeptide, removed by a carboxypeptidase.

The protein belongs to the long (4 C-C) scorpion toxin superfamily. Sodium channel inhibitor family. Beta subfamily. Expressed by the venom gland.

Its subcellular location is the secreted. Functionally, sodium channel inhibitor. Possesses potent toxicity in mice but induces only paralysis in cotton bollworm. The sequence is that of BmKBT-like peptide from Olivierus martensii (Manchurian scorpion).